A 298-amino-acid chain; its full sequence is Acetylglutamate kinase (298 aa).

Substrate contacts are provided by residues 69 to 70 (GG), Arg-91, and Asn-196.

This sequence belongs to the acetylglutamate kinase family. ArgB subfamily.

The protein localises to the cytoplasm. It carries out the reaction N-acetyl-L-glutamate + ATP = N-acetyl-L-glutamyl 5-phosphate + ADP. The protein operates within amino-acid biosynthesis; L-arginine biosynthesis; N(2)-acetyl-L-ornithine from L-glutamate: step 2/4. Its function is as follows. Catalyzes the ATP-dependent phosphorylation of N-acetyl-L-glutamate. This Rhodopseudomonas palustris (strain BisB18) protein is Acetylglutamate kinase.